The sequence spans 267 residues: MNALLTNPFKERLRKGEVQIGLWLSSTTAYMAEIAATSGYDWLLIDGEHAPNTIQDLYHQLQAVAPYASHPVIRPVEGSKPLIKQVLDIGAQTLLIPMVDTADQARQVVSATRYPPYGERGVGASVARAARWGRIENYMAQVNDSLCLLVQVESKTALDNLDEILDVEGIDGVFIGPADLSASLGYPDNAGHQEVQRIIETSIRRIRAAGKAAGFLAVAPDMAQQCLAWGTNFVAVGVDTMLYSDALDQRLAMFKSGKNGPRVKGSY.

The active-site Proton acceptor is His49. Substrate is bound at residue Gln151. Residue Glu153 participates in Mg(2+) binding. Ala178 and Asp179 together coordinate substrate. Asp179 contacts Mg(2+).

The protein belongs to the HpcH/HpaI aldolase family. KDR aldolase subfamily. Homohexamer. It depends on Mg(2+) as a cofactor.

It catalyses the reaction 2-dehydro-3-deoxy-L-rhamnonate = (S)-lactaldehyde + pyruvate. Catalyzes the reversible retro-aldol cleavage of 2-keto-3-deoxy-L-rhamnonate (KDR) to pyruvate and lactaldehyde. The chain is 2-keto-3-deoxy-L-rhamnonate aldolase from Escherichia coli O6:K15:H31 (strain 536 / UPEC).